The chain runs to 739 residues: Exocyst complex component 3-like protein (739 aa).

Disordered regions lie at residues 1 to 21 (MDSK…PEWP) and 698 to 718 (AALS…RRAL). The mediates interaction with EXOC2, EXOC4 and EXOC5 stretch occupies residues 1-370 (MDSKIQPTLR…DVSQLEPLLT (370 aa)).

It belongs to the SEC6 family. Interacts with EXOC2, EXOC4 and EXOC5; may be part of the exocyst. In terms of tissue distribution, ubiquitously expressed.

The protein resides in the cytoplasmic vesicle. It localises to the secretory vesicle. As part of the exocyst, may play a role in regulated exocytosis of insulin granules. The sequence is that of Exocyst complex component 3-like protein (Exoc3l1) from Mus musculus (Mouse).